We begin with the raw amino-acid sequence, 209 residues long: Phosphoheptose isomerase (209 aa).

The SIS domain occupies 50–209 (IADTFREGGK…ELVEKMMGYD (160 aa)). 65–67 (NGG) contacts substrate. Positions 74 and 78 each coordinate Zn(2+). Substrate-binding positions include Glu-78, 109–110 (ND), 135–137 (STS), Ser-140, and Gln-188. 2 residues coordinate Zn(2+): Gln-188 and His-196.

The protein belongs to the SIS family. GmhA subfamily. It depends on Zn(2+) as a cofactor.

It is found in the cytoplasm. The catalysed reaction is 2 D-sedoheptulose 7-phosphate = D-glycero-alpha-D-manno-heptose 7-phosphate + D-glycero-beta-D-manno-heptose 7-phosphate. It participates in carbohydrate biosynthesis; D-glycero-D-manno-heptose 7-phosphate biosynthesis; D-glycero-alpha-D-manno-heptose 7-phosphate and D-glycero-beta-D-manno-heptose 7-phosphate from sedoheptulose 7-phosphate: step 1/1. In terms of biological role, catalyzes the isomerization of sedoheptulose 7-phosphate in D-glycero-D-manno-heptose 7-phosphate. The chain is Phosphoheptose isomerase from Chlorobaculum tepidum (strain ATCC 49652 / DSM 12025 / NBRC 103806 / TLS) (Chlorobium tepidum).